The primary structure comprises 354 residues: Ferrochelatase (354 aa).

His214 and Glu295 together coordinate Fe cation.

The protein belongs to the ferrochelatase family.

It is found in the cytoplasm. It catalyses the reaction heme b + 2 H(+) = protoporphyrin IX + Fe(2+). It participates in porphyrin-containing compound metabolism; protoheme biosynthesis; protoheme from protoporphyrin-IX: step 1/1. Functionally, catalyzes the ferrous insertion into protoporphyrin IX. This chain is Ferrochelatase, found in Burkholderia lata (strain ATCC 17760 / DSM 23089 / LMG 22485 / NCIMB 9086 / R18194 / 383).